Reading from the N-terminus, the 104-residue chain is UPF0045 protein YqgV (104 aa).

It belongs to the UPF0045 family.

The polypeptide is UPF0045 protein YqgV (yqgV) (Bacillus subtilis (strain 168)).